Here is a 223-residue protein sequence, read N- to C-terminus: Golgi SNAP receptor complex member 1 (223 aa).

At S2 the chain carries N-acetylserine. Over 2 to 204 (SSQPSFVTIR…MKINTRRKKN (203 aa)) the chain is Cytoplasmic. S164 is modified (phosphoserine). Residues 205–222 (AFVLATITTLCILFLFFT) form a helical; Anchor for type IV membrane protein membrane-spanning segment. Position 223 (W223) is a topological domain, vesicular.

Belongs to the GOSR1 family. As to quaternary structure, component of several multiprotein Golgi SNARE complexes. Identified in a Golgi SNARE complex consisting of t-SNARES SED5, YKT6, and the v-SNARE SFT1. Interacts with BET1. Interacts with BOS1. Interacts with SEC22. Interacts with PEP12. Interacts with self.

The protein resides in the golgi apparatus membrane. In terms of biological role, involved in transport from the ER to the Golgi apparatus as well as in intra-Golgi transport. It belongs to a super-family of proteins called t-SNAREs or soluble NSF (N-ethylmaleimide-sensitive factor) attachment protein receptor. Rescues alpha-factor maturation defects. This chain is Golgi SNAP receptor complex member 1 (GOS1), found in Saccharomyces cerevisiae (strain ATCC 204508 / S288c) (Baker's yeast).